Here is a 249-residue protein sequence, read N- to C-terminus: DNA repair protein RecO (249 aa).

Belongs to the RecO family.

Involved in DNA repair and RecF pathway recombination. This is DNA repair protein RecO from Sinorhizobium medicae (strain WSM419) (Ensifer medicae).